The sequence spans 165 residues: Cytochrome c-550-like protein (165 aa).

Positions 1–38 (MPHLDQKLPMRWRIPSRLWAWVGILALLWLGLASPVAA) are cleaved as a signal peptide. The heme c site is built by Cys-83, Cys-86, His-87, and Cys-137.

The protein belongs to the cytochrome c family. PsbV subfamily. It depends on heme c as a cofactor.

It is found in the cellular thylakoid membrane. Its function is as follows. Possible low-potential cytochrome c. The polypeptide is Cytochrome c-550-like protein (psbV2) (Synechococcus sp. (strain JA-2-3B'a(2-13)) (Cyanobacteria bacterium Yellowstone B-Prime)).